We begin with the raw amino-acid sequence, 246 residues long: Cold-regulated protein 27 (246 aa).

2 disordered regions span residues methionine 1–alanine 39 and glutamate 151–leucine 232. Over residues serine 168–serine 180 the composition is skewed to low complexity.

It localises to the nucleus. Functionally, together with COR28, involved in central circadian clock regulation and in flowering promotion, by binding to the chromatin of clock-associated evening genes TOC1, PRR5, ELF4 and cold-responsive genes in order to repress their transcription. Negative regulator of freezing tolerance. This is Cold-regulated protein 27 from Arabidopsis thaliana (Mouse-ear cress).